The chain runs to 102 residues: Small ribosomal subunit protein uS10 (102 aa).

The protein belongs to the universal ribosomal protein uS10 family. Part of the 30S ribosomal subunit.

In terms of biological role, involved in the binding of tRNA to the ribosomes. The polypeptide is Small ribosomal subunit protein uS10 (Gluconacetobacter diazotrophicus (strain ATCC 49037 / DSM 5601 / CCUG 37298 / CIP 103539 / LMG 7603 / PAl5)).